The primary structure comprises 308 residues: Adult enhancer factor 1 (308 aa).

Disordered stretches follow at residues 50 to 94 (AHMA…PLPF) and 123 to 143 (QAAA…THLT). Over residues 56–76 (QQQQQQQQQQQQQHHQQQQQQ) the composition is skewed to low complexity. Residues 81-90 (PSVPPPPTEL) show a composition bias toward pro residues. 4 C2H2-type zinc fingers span residues 184-206 (FHCT…VKIH), 212-234 (YKCN…LKIH), 240-262 (YNCN…VKIH), and 268-290 (FECV…IKIH).

Found in all tissues examined including the ovary and the fat body.

It localises to the nucleus. Functionally, transcriptional repressor that binds specifically to fat body-specific enhancers, namely the adult ADH enhancer (AAE) and the enhancer that controls yolk protein gene expression. The polypeptide is Adult enhancer factor 1 (Aef1) (Drosophila melanogaster (Fruit fly)).